We begin with the raw amino-acid sequence, 448 residues long: Bifunctional protein GlmU (448 aa).

The segment at 1–229 (MNNHTLNIII…NDEIQGINNL (229 aa)) is pyrophosphorylase. UDP-N-acetyl-alpha-D-glucosamine is bound by residues 11–14 (LAAG), Lys-25, Gln-76, 81–82 (GT), 103–105 (YGD), Gly-140, Glu-154, Asn-169, and Asn-227. Residue Asp-105 coordinates Mg(2+). Asn-227 provides a ligand contact to Mg(2+). Positions 230–250 (LQLVRAEKIYQKQQAKLLLLS) are linker. The tract at residues 251–448 (GIMIYNPSNF…NEKKQIHKKL (198 aa)) is N-acetyltransferase. Lys-351 contacts UDP-N-acetyl-alpha-D-glucosamine. His-363 functions as the Proton acceptor in the catalytic mechanism. Positions 366 and 377 each coordinate UDP-N-acetyl-alpha-D-glucosamine. Acetyl-CoA contacts are provided by residues Ala-380, 386-387 (NY), Ser-405, and Ala-423.

This sequence in the N-terminal section; belongs to the N-acetylglucosamine-1-phosphate uridyltransferase family. The protein in the C-terminal section; belongs to the transferase hexapeptide repeat family. In terms of assembly, homotrimer. Mg(2+) serves as cofactor.

It is found in the cytoplasm. The enzyme catalyses alpha-D-glucosamine 1-phosphate + acetyl-CoA = N-acetyl-alpha-D-glucosamine 1-phosphate + CoA + H(+). It carries out the reaction N-acetyl-alpha-D-glucosamine 1-phosphate + UTP + H(+) = UDP-N-acetyl-alpha-D-glucosamine + diphosphate. Its pathway is nucleotide-sugar biosynthesis; UDP-N-acetyl-alpha-D-glucosamine biosynthesis; N-acetyl-alpha-D-glucosamine 1-phosphate from alpha-D-glucosamine 6-phosphate (route II): step 2/2. The protein operates within nucleotide-sugar biosynthesis; UDP-N-acetyl-alpha-D-glucosamine biosynthesis; UDP-N-acetyl-alpha-D-glucosamine from N-acetyl-alpha-D-glucosamine 1-phosphate: step 1/1. It participates in bacterial outer membrane biogenesis; LPS lipid A biosynthesis. Its function is as follows. Catalyzes the last two sequential reactions in the de novo biosynthetic pathway for UDP-N-acetylglucosamine (UDP-GlcNAc). The C-terminal domain catalyzes the transfer of acetyl group from acetyl coenzyme A to glucosamine-1-phosphate (GlcN-1-P) to produce N-acetylglucosamine-1-phosphate (GlcNAc-1-P), which is converted into UDP-GlcNAc by the transfer of uridine 5-monophosphate (from uridine 5-triphosphate), a reaction catalyzed by the N-terminal domain. The protein is Bifunctional protein GlmU of Buchnera aphidicola subsp. Baizongia pistaciae (strain Bp).